Reading from the N-terminus, the 457-residue chain is Bifunctional protein GlmU (457 aa).

The pyrophosphorylase stretch occupies residues 1–230 (MPLSLPLHIV…PREVEGVNDL (230 aa)). UDP-N-acetyl-alpha-D-glucosamine is bound by residues 12-15 (LAAG), K26, Q78, 83-84 (GT), 105-107 (YGD), G140, E155, N170, and N228. A Mg(2+)-binding site is contributed by D107. N228 provides a ligand contact to Mg(2+). The tract at residues 231-251 (WQLTQLERTWQIRAARALCLQ) is linker. The interval 252 to 457 (GARVADPARL…DGWQRPKKKT (206 aa)) is N-acetyltransferase. Residues R334 and K352 each contribute to the UDP-N-acetyl-alpha-D-glucosamine site. H364 acts as the Proton acceptor in catalysis. UDP-N-acetyl-alpha-D-glucosamine contacts are provided by Y367 and N378. Residues A381, 387–388 (NY), S406, A424, and R441 contribute to the acetyl-CoA site.

In the N-terminal section; belongs to the N-acetylglucosamine-1-phosphate uridyltransferase family. It in the C-terminal section; belongs to the transferase hexapeptide repeat family. In terms of assembly, homotrimer. It depends on Mg(2+) as a cofactor.

It localises to the cytoplasm. The catalysed reaction is alpha-D-glucosamine 1-phosphate + acetyl-CoA = N-acetyl-alpha-D-glucosamine 1-phosphate + CoA + H(+). It carries out the reaction N-acetyl-alpha-D-glucosamine 1-phosphate + UTP + H(+) = UDP-N-acetyl-alpha-D-glucosamine + diphosphate. It functions in the pathway nucleotide-sugar biosynthesis; UDP-N-acetyl-alpha-D-glucosamine biosynthesis; N-acetyl-alpha-D-glucosamine 1-phosphate from alpha-D-glucosamine 6-phosphate (route II): step 2/2. The protein operates within nucleotide-sugar biosynthesis; UDP-N-acetyl-alpha-D-glucosamine biosynthesis; UDP-N-acetyl-alpha-D-glucosamine from N-acetyl-alpha-D-glucosamine 1-phosphate: step 1/1. Its pathway is bacterial outer membrane biogenesis; LPS lipid A biosynthesis. Catalyzes the last two sequential reactions in the de novo biosynthetic pathway for UDP-N-acetylglucosamine (UDP-GlcNAc). The C-terminal domain catalyzes the transfer of acetyl group from acetyl coenzyme A to glucosamine-1-phosphate (GlcN-1-P) to produce N-acetylglucosamine-1-phosphate (GlcNAc-1-P), which is converted into UDP-GlcNAc by the transfer of uridine 5-monophosphate (from uridine 5-triphosphate), a reaction catalyzed by the N-terminal domain. The chain is Bifunctional protein GlmU from Xylella fastidiosa (strain M12).